A 393-amino-acid polypeptide reads, in one-letter code: Homoserine O-succinyltransferase (393 aa).

The region spanning 62–372 (NAVLVCHALN…PHGHDAFLLD (311 aa)) is the AB hydrolase-1 domain. Ser-168 acts as the Nucleophile in catalysis. Arg-238 is a binding site for substrate. Catalysis depends on residues Asp-333 and His-366. Asp-367 lines the substrate pocket.

It belongs to the AB hydrolase superfamily. MetX family. Homodimer.

The protein localises to the cytoplasm. It catalyses the reaction L-homoserine + succinyl-CoA = O-succinyl-L-homoserine + CoA. It participates in amino-acid biosynthesis; L-methionine biosynthesis via de novo pathway; O-succinyl-L-homoserine from L-homoserine: step 1/1. In terms of biological role, transfers a succinyl group from succinyl-CoA to L-homoserine, forming succinyl-L-homoserine. The polypeptide is Homoserine O-succinyltransferase (Cupriavidus necator (strain ATCC 17699 / DSM 428 / KCTC 22496 / NCIMB 10442 / H16 / Stanier 337) (Ralstonia eutropha)).